The sequence spans 214 residues: MRPDGPRDPVAGPDSGPEPPYPVRLSGPVIKGFGRGSKELGIPTANIPAEGLEEYPDLQVGVYYGVVALDPAKFQYQEGQGSTSTSSTGGAEAAVLPAVLSIGYNPFYKNKTKSIEIHIMPPLSSPSPTADGAGEVKFHKLPDFYGTQLKLLILGYIRPEYDYVSLEALIEDIRVDCEVARKSLQRPAYACYIDGDEKECSDVVREQRRWLVTF.

A disordered region spans residues 1 to 26; it reads MRPDGPRDPVAGPDSGPEPPYPVRLS. Positions 44 and 46 each coordinate Mg(2+). Glutamate 116 acts as the Nucleophile in catalysis.

The protein belongs to the flavokinase family. The cofactor is Zn(2+). Mg(2+) serves as cofactor.

It carries out the reaction riboflavin + ATP = FMN + ADP + H(+). It participates in cofactor biosynthesis; FMN biosynthesis; FMN from riboflavin (ATP route): step 1/1. Its function is as follows. Catalyzes the phosphorylation of riboflavin (vitamin B2) to form flavin mononucleotide (FMN) coenzyme. The polypeptide is Riboflavin kinase (fmn1) (Aspergillus fumigatus (strain ATCC MYA-4609 / CBS 101355 / FGSC A1100 / Af293) (Neosartorya fumigata)).